Reading from the N-terminus, the 757-residue chain is Two pore calcium channel protein 1 (757 aa).

Residues 1 to 94 (MRERGEMREA…NDTRFERAMR (94 aa)) are Cytoplasmic-facing. Positions 24 to 48 (HSHGSGSSGTGSHTSGGGGGWRGSR) are disordered. Residues 29–45 (GSSGTGSHTSGGGGGWR) are compositionally biased toward gly residues. The chain crosses the membrane as a helical span at residues 95–115 (FYFVYLRLDWLWSLNLFALIL). At 116–152 (LNFLEKPLWCRGYSQHACDQRDLYFLGQLPYLSKTES) the chain is on the extracellular side. Residues 153 to 173 (LIYEGLTLVILVMDIFYPLSY) form a helical membrane-spanning segment. Topologically, residues 174-188 (EGLNLFWKNTINKLK) are cytoplasmic. Residues 189 to 209 (VLLLFILACDILVFAFSPQPF) form a helical membrane-spanning segment. A topological domain (extracellular) is located at residue R210. The chain crosses the membrane as a helical; Voltage-sensor span at residues 211–228 (VAPYIRVAFLIMNIRELR). The Cytoplasmic segment spans residues 229–233 (MCAVT). Residues 234–254 (LVGMVGTYLNVLALSLLFLLF) form a helical membrane-spanning segment. Residues 255–270 (ASWLAYVTFEDTPQGK) are Extracellular-facing. An intramembrane region (pore-forming) is located at residues 271–285 (TVFSSYGTTLYQMFI). Residues 286 to 308 (LFTTSNNPDVWVPAYKSSRWSSL) lie on the Extracellular side of the membrane. The chain crosses the membrane as a helical span at residues 309–329 (FFIVYVLLGVYFLTNLILAVI). At 330–453 (YDSFKEQLAK…LCEWLKSFVR (124 aa)) the chain is on the cytoplasmic side. 2 EF-hand domains span residues 347-382 (TRKSILEKAFGIIDATGQGYLNKEQCLSLLDELNKY) and 388-423 (TSREDFELIFAELDQSGDFKVTSEEFATLCNTIAIK). Residues 454-474 (SPLFEYIVIFVLLMNLVAVII) traverse the membrane as a helical segment. Residues 475–493 (ETTLDIENSSSQKVWQEVE) are Extracellular-facing. N-linked (GlcNAc...) asparagine glycosylation occurs at N482. A helical membrane pass occupies residues 494–514 (FVFGWIYVIEMALKIFSLGFG). Topologically, residues 515 to 523 (AYWMEGQNK) are cytoplasmic. The chain crosses the membrane as a helical span at residues 524-544 (FDFVLTWTIFIGETLTFAFPS). At 545–553 (KLSFLSNGE) the chain is on the extracellular side. The chain crosses the membrane as a helical; Voltage-sensor span at residues 554 to 571 (WIRYLLLGRMLRLTRILL). At 572-595 (QVRRFRAFVATFFTLMSSLMPYLG) the chain is on the cytoplasmic side. The helical transmembrane segment at 596–616 (IVFCTLCIYCSLGLQIFGGIV) threads the bilayer. The Extracellular segment spans residues 617–640 (YAGNPTLEETDLFSNDYLLFNFND). Positions 641-655 (YPSGMVTLFNLLVMG) form an intramembrane region, pore-forming. At 656-676 (NWQAWMESYRQLTGSYWSLIY) the chain is on the extracellular side. The helical transmembrane segment at 677-697 (FVSFYLISVLLLLNLIVAFVL) threads the bilayer. The Cytoplasmic portion of the chain corresponds to 698-757 (EAFFAEMELEKDGEADIQDPTLEGRNRRRSVRVRTKGTMVDILLHHMLSNELDGSQNRDQ).

This sequence belongs to the calcium channel alpha-1 subunit (TC 1.A.1.11) family. Two pore calcium channel subfamily. As to quaternary structure, homodimer. As to expression, expressed in shoot, mature leaf, cultured cells, and at lower level in roots.

The protein localises to the membrane. Its activity is regulated as follows. Inhibited by the VDCC blocker verapamil in yeast cells. Channel activity may be down-regulated by cytosolic Ca(2+) in rice cells. Inhibited by Al(3+). Its function is as follows. May function as one of the major voltage-gated Ca(2+) channel (VDCC) across the plasma membrane. May be involved in the regulation of cytosolic Ca(2+) and in growth and development. Acts as the major ROS-responsive Ca(2+) channel and is the possible target of Al-dependent inhibition. Determines sensitivity to T.viride xylanase elicitor. Plays a regulatory role in elicitor-induced defense responses and hypersensitive cell death. The chain is Two pore calcium channel protein 1 (TPC1) from Oryza sativa subsp. japonica (Rice).